A 458-amino-acid chain; its full sequence is Phosphoglucosamine mutase (458 aa).

The active-site Phosphoserine intermediate is the serine 100. Mg(2+)-binding residues include serine 100, aspartate 239, aspartate 241, and aspartate 243. Position 100 is a phosphoserine (serine 100).

Belongs to the phosphohexose mutase family. Mg(2+) is required as a cofactor. Activated by phosphorylation.

The enzyme catalyses alpha-D-glucosamine 1-phosphate = D-glucosamine 6-phosphate. In terms of biological role, catalyzes the conversion of glucosamine-6-phosphate to glucosamine-1-phosphate. The polypeptide is Phosphoglucosamine mutase (Dictyoglomus thermophilum (strain ATCC 35947 / DSM 3960 / H-6-12)).